A 1401-amino-acid polypeptide reads, in one-letter code: DNA-directed RNA polymerase subunit beta (1401 aa).

The protein belongs to the RNA polymerase beta chain family. The RNAP catalytic core consists of 2 alpha, 1 beta, 1 beta' and 1 omega subunit. When a sigma factor is associated with the core the holoenzyme is formed, which can initiate transcription.

It carries out the reaction RNA(n) + a ribonucleoside 5'-triphosphate = RNA(n+1) + diphosphate. Functionally, DNA-dependent RNA polymerase catalyzes the transcription of DNA into RNA using the four ribonucleoside triphosphates as substrates. The sequence is that of DNA-directed RNA polymerase subunit beta from Zymomonas mobilis subsp. mobilis (strain ATCC 31821 / ZM4 / CP4).